A 547-amino-acid chain; its full sequence is Chaperonin GroEL (547 aa).

ATP is bound by residues 30–33 (TLGP), Lys51, 87–91 (DGTTT), Gly415, 479–481 (NAA), and Asp495. The tract at residues 524-547 (APKKDEPTPPAAGGGMGGMGGMDF) is disordered. Positions 535 to 547 (AGGGMGGMGGMDF) are enriched in gly residues.

This sequence belongs to the chaperonin (HSP60) family. As to quaternary structure, forms a cylinder of 14 subunits composed of two heptameric rings stacked back-to-back. Interacts with the co-chaperonin GroES.

It localises to the cytoplasm. The enzyme catalyses ATP + H2O + a folded polypeptide = ADP + phosphate + an unfolded polypeptide.. Its function is as follows. Together with its co-chaperonin GroES, plays an essential role in assisting protein folding. The GroEL-GroES system forms a nano-cage that allows encapsulation of the non-native substrate proteins and provides a physical environment optimized to promote and accelerate protein folding. In Xylella fastidiosa (strain M23), this protein is Chaperonin GroEL.